Here is a 266-residue protein sequence, read N- to C-terminus: MTVIDILTRVDSICKKYDKYDVDKQREANISGDDAFARLYGAFETQIETALEKAELVTKEKNRAAAVAMNAEIRRTKARLSEEVPKLQRLAVKRVKGLTTEELAARNDLVLALPARIEAIPDGTAGGPKSTSAWTPSSTTSRPDIKFDSDGRFDDDYFQESNESSQFRQEYEMRKIKQEQGLDMISEGLDALKNMASDMNEELDRQVPLMDEIDTKVDRATSDLKNTNVRLKDTVNQLRSSRNFCIDIVLLCIVLGIAAYLYNVLK.

The Cytoplasmic segment spans residues 1-243; that stretch reads MTVIDILTRV…TVNQLRSSRN (243 aa). Phosphoserine is present on Ser-12. Positions 44-87 form a coiled coil; the sequence is ETQIETALEKAELVTKEKNRAAAVAMNAEIRRTKARLSEEVPKL. Residues 122 to 146 form a disordered region; sequence DGTAGGPKSTSAWTPSSTTSRPDIK. Residues 130–141 show a composition bias toward low complexity; sequence STSAWTPSSTTS. The t-SNARE coiled-coil homology domain maps to 172–234; it reads EMRKIKQEQG…KNTNVRLKDT (63 aa). The helical; Anchor for type IV membrane protein transmembrane segment at 244–264 threads the bilayer; the sequence is FCIDIVLLCIVLGIAAYLYNV. Residues 265 to 266 lie on the Vesicular side of the membrane; the sequence is LK.

The protein belongs to the syntaxin family. As to quaternary structure, part of the t-SNARE complex. Expressed in root, leaf, stem, flower and silique.

It is found in the membrane. Its function is as follows. Vesicle trafficking protein that functions in the secretory pathway. The sequence is that of Syntaxin-71 (SYP71) from Arabidopsis thaliana (Mouse-ear cress).